A 314-amino-acid chain; its full sequence is Chlorinase cctP2 (314 aa).

Positions 1–14 (MEGKTSRYQDEAHD) are enriched in basic and acidic residues. The tract at residues 1–24 (MEGKTSRYQDEAHDSAGSFNEETE) is disordered. 2 short sequence motifs (HXXHC) span residues 150-154 (HALHC) and 177-181 (HIEHC).

This sequence belongs to the ustYa family.

The protein operates within mycotoxin biosynthesis. Functionally, chlorinase; part of the gene cluster that mediates the biosynthesis of the mycotoxin cyclochlorotine, a hepatotoxic and carcinogenic cyclic chlorinated pentapeptide. Within the pathway, cctP2 catalyzes the formation of isocyclochlorotine via dichlorination of the Pro from the isocyclotine skeleton. The NRPS cctN initially catalyzes the condensation of L-serine (Ser), Pro, L-2-aminobutyrate (2Abu), Ser, and beta-Phe in this order to produce isocyclotine. After the dichlorination of Pro2 catalyzed by cctP2 to produce isocyclochlorotine, the cctO-mediated transacylation of isocyclochlorotine can furnish cyclochlorotine. The subsequent hydroxylation of cyclochlorotine by cctR yields hydroxycyclochlorotine as the final product. CctP1 probably acts as a phenylalanine aminomutase and provides the uncommon building block beta-Phe. Furthermore, 2Abu can be synthesized from threonine by one of the threonine dehydratases and transaminases localized outside of the cluster. The functions of the remaining proteins encoded by the cluster, cctM and cctT, have not been identified yet. In Talaromyces islandicus (Penicillium islandicum), this protein is Chlorinase cctP2.